The primary structure comprises 466 residues: MRNSWVASRKGKTNVSQMHFARKGEITEEMRYVAKRENLPESLVMEEVARGRMVIPANINHMNLEPMAIGIASTCKVNANIGASPNASDISEELKKLDLAVKYGADTLMDLSTGGVNLDEVRTEIINASPIPIGTVPVYQALESVHGSISRLNEDDFLHIIEKHCQQGVDYQTIHAGLLIEHLPKVKGRITGIVSRGGGILAQWMLYHYKQNPLFTRFDDICEIFKRYDCTFSLGDSLRPGCLHDASDEAQLAELKTLGELTRRAWKHDVQVMVEGPGHVPMDQIEFNVRKQMEECSEAPFYVLGPLVTDISPGYDHISSAIGAAMAGWYGTAMLCYVTPKEHLGLPNPEDVREGLIAYKIAAHAADVARHRSGARDRDDELSKARKEFDWNKQFELSLDPERAKQYHDETLPEEIFKKAEFCSMCGPNHCPMNTKITDEDLDKLNDQIQSKGAAELTPVKLNKEN.

Substrate is bound by residues N80, M109, Y139, H175, 195-197, 236-239, and E275; these read SRG and DSLR. Residue H279 participates in Zn(2+) binding. Y302 is a binding site for substrate. H343 contacts Zn(2+). [4Fe-4S] cluster contacts are provided by C423, C426, and C431.

It belongs to the ThiC family. Requires [4Fe-4S] cluster as cofactor.

The enzyme catalyses 5-amino-1-(5-phospho-beta-D-ribosyl)imidazole + S-adenosyl-L-methionine = 4-amino-2-methyl-5-(phosphooxymethyl)pyrimidine + CO + 5'-deoxyadenosine + formate + L-methionine + 3 H(+). It participates in cofactor biosynthesis; thiamine diphosphate biosynthesis. In terms of biological role, catalyzes the synthesis of the hydroxymethylpyrimidine phosphate (HMP-P) moiety of thiamine from aminoimidazole ribotide (AIR) in a radical S-adenosyl-L-methionine (SAM)-dependent reaction. The sequence is that of Phosphomethylpyrimidine synthase from Prochlorococcus marinus (strain NATL2A).